A 358-amino-acid chain; its full sequence is 3-dehydroquinate synthase (358 aa).

Residues 70 to 75 (DGEQFK), 104 to 108 (GVIGD), 128 to 129 (TT), Lys-141, Lys-150, and 168 to 171 (CLHT) each bind NAD(+). Residues Glu-183, His-246, and His-263 each coordinate Zn(2+).

It belongs to the sugar phosphate cyclases superfamily. Dehydroquinate synthase family. Co(2+) serves as cofactor. It depends on Zn(2+) as a cofactor. The cofactor is NAD(+).

Its subcellular location is the cytoplasm. The enzyme catalyses 7-phospho-2-dehydro-3-deoxy-D-arabino-heptonate = 3-dehydroquinate + phosphate. The protein operates within metabolic intermediate biosynthesis; chorismate biosynthesis; chorismate from D-erythrose 4-phosphate and phosphoenolpyruvate: step 2/7. Functionally, catalyzes the conversion of 3-deoxy-D-arabino-heptulosonate 7-phosphate (DAHP) to dehydroquinate (DHQ). This Shewanella baltica (strain OS195) protein is 3-dehydroquinate synthase.